The chain runs to 514 residues: Zinc finger CCCH-type with G patch domain-containing protein (514 aa).

Positions 96 to 129 (GEEPQPPGAGDGASTGSKDSEEEEEEEDGSSGMK) are disordered. The segment covering 115 to 124 (SEEEEEEEDG) has biased composition (acidic residues). The segment at 171-197 (KAMKPCPFFLDGKCRFDDSCRFSHGQV) adopts a C3H1-type zinc-finger fold. Disordered stretches follow at residues 262-288 (IPPL…AAED), 363-422 (QQRK…AAER), and 494-514 (EEHS…MTEF). Over residues 272-287 (SSDDDDDDEEEDDAAE) the composition is skewed to acidic residues. Residues 315 to 373 (TRGIGSKLLARMGYEIGKGLGRNAEGRVEPIQAVLLPKGKSLDQCIEMQQRKKAGGKRE) enclose the G-patch domain. Positions 365–383 (RKKAGGKREHKAGKRRPRA) are enriched in basic residues.

It is found in the nucleus. Transcription repressor that specifically binds the 5'-GGAG[GA]A[GA]A-3' consensus sequence. Represses transcription by recruiting the chromatin multiprotein complex NuRD to target promoters. Negatively regulates expression of EGFR, a gene involved in cell proliferation, survival and migration. In Xenopus tropicalis (Western clawed frog), this protein is Zinc finger CCCH-type with G patch domain-containing protein (zgpat).